The chain runs to 516 residues: Gamma-aminobutyrate transaminase 1, mitochondrial (516 aa).

Residues 1-47 (MVIARGLLRSNASSSSSQAINLLKYVTSTGSLQGHTQNLCDASTRHF) constitute a mitochondrion transit peptide. 171–172 (GS) is a binding site for pyridoxal 5'-phosphate. A substrate-binding site is contributed by Tyr-204. Asp-311 is a pyridoxal 5'-phosphate binding site. Substrate is bound at residue Lys-340. N6-(pyridoxal phosphate)lysine is present on Lys-340.

It belongs to the class-III pyridoxal-phosphate-dependent aminotransferase family. As to expression, expressed in roots, stems and panicles.

The protein localises to the mitochondrion. The enzyme catalyses 4-aminobutanoate + pyruvate = succinate semialdehyde + L-alanine. The catalysed reaction is 4-aminobutanoate + glyoxylate = succinate semialdehyde + glycine. Functionally, transaminase that degrades gamma-amino butyric acid (GABA) and uses pyruvate as amino-group acceptor, but not 2-oxoglutarate. Not involved in the interaction with blast fungus. The protein is Gamma-aminobutyrate transaminase 1, mitochondrial (OSL2) of Oryza sativa subsp. japonica (Rice).